The following is a 132-amino-acid chain: Phosphoribosyl-AMP cyclohydrolase (132 aa).

D79 provides a ligand contact to Mg(2+). C80 serves as a coordination point for Zn(2+). 2 residues coordinate Mg(2+): D81 and D83. Zn(2+) is bound by residues C100 and C107.

This sequence belongs to the PRA-CH family. In terms of assembly, homodimer. Requires Mg(2+) as cofactor. The cofactor is Zn(2+).

Its subcellular location is the cytoplasm. The enzyme catalyses 1-(5-phospho-beta-D-ribosyl)-5'-AMP + H2O = 1-(5-phospho-beta-D-ribosyl)-5-[(5-phospho-beta-D-ribosylamino)methylideneamino]imidazole-4-carboxamide. The protein operates within amino-acid biosynthesis; L-histidine biosynthesis; L-histidine from 5-phospho-alpha-D-ribose 1-diphosphate: step 3/9. In terms of biological role, catalyzes the hydrolysis of the adenine ring of phosphoribosyl-AMP. The sequence is that of Phosphoribosyl-AMP cyclohydrolase from Acidovorax sp. (strain JS42).